The chain runs to 434 residues: Protein arginine N-methyltransferase 2 (434 aa).

The segment at 155 to 198 (IQGEETTEEERKEEEPSNTSDIIDEQKVEQPKEDLKEDPSSNQE) is disordered. A compositionally biased stretch (basic and acidic residues) spans 178–193 (DEQKVEQPKEDLKEDP). An RMT2 domain is found at 193-434 (PSSNQETYLK…YHPEARFMDV (242 aa)). S-adenosyl-L-methionine is bound by residues Tyr200, Met230, 258 to 263 (FGMGII), 279 to 281 (EAH), 306 to 307 (WQ), and Asp327.

This sequence belongs to the class I-like SAM-binding methyltransferase superfamily. RMT2 methyltransferase family. In terms of assembly, monomer.

It localises to the cytoplasm. It is found in the nucleus. In terms of biological role, S-adenosyl-L-methionine-dependent protein-arginine N-methyltransferase that methylates the delta-nitrogen atom of arginine residues to form N5-methylarginine (type IV) in target proteins. Monomethylates ribosomal protein L12. This chain is Protein arginine N-methyltransferase 2, found in Debaryomyces hansenii (strain ATCC 36239 / CBS 767 / BCRC 21394 / JCM 1990 / NBRC 0083 / IGC 2968) (Yeast).